The chain runs to 479 residues: Leucine-rich repeat-containing protein 74A (479 aa).

The span at 1–10 (MDDDDIEPLE) shows a compositional bias: acidic residues. The disordered stretch occupies residues 1 to 29 (MDDDDIEPLEYETKDETEAALAPQSSEDT). LRR repeat units follow at residues 119 to 140 (TVLK…SLME), 147 to 167 (YLQE…RIIS), 176 to 197 (SLWK…LLCQ), 204 to 225 (RIRS…YLGQ), 232 to 253 (GLQS…ALCN), 260 to 281 (TLKK…ALGD), 288 to 309 (CLVY…RISK), and 316 to 336 (CLQV…YSLI).

This is Leucine-rich repeat-containing protein 74A from Rattus norvegicus (Rat).